A 359-amino-acid polypeptide reads, in one-letter code: Phosphoserine aminotransferase (359 aa).

R41 contacts L-glutamate. Pyridoxal 5'-phosphate is bound by residues 75–76, W101, T152, D171, and Q194; that span reads AS. At K195 the chain carries N6-(pyridoxal phosphate)lysine. 236–237 serves as a coordination point for pyridoxal 5'-phosphate; sequence NT.

Belongs to the class-V pyridoxal-phosphate-dependent aminotransferase family. SerC subfamily. Homodimer. Requires pyridoxal 5'-phosphate as cofactor.

It localises to the cytoplasm. The enzyme catalyses O-phospho-L-serine + 2-oxoglutarate = 3-phosphooxypyruvate + L-glutamate. The catalysed reaction is 4-(phosphooxy)-L-threonine + 2-oxoglutarate = (R)-3-hydroxy-2-oxo-4-phosphooxybutanoate + L-glutamate. Its pathway is amino-acid biosynthesis; L-serine biosynthesis; L-serine from 3-phospho-D-glycerate: step 2/3. The protein operates within cofactor biosynthesis; pyridoxine 5'-phosphate biosynthesis; pyridoxine 5'-phosphate from D-erythrose 4-phosphate: step 3/5. Catalyzes the reversible conversion of 3-phosphohydroxypyruvate to phosphoserine and of 3-hydroxy-2-oxo-4-phosphonooxybutanoate to phosphohydroxythreonine. The chain is Phosphoserine aminotransferase from Acinetobacter baumannii (strain ACICU).